The primary structure comprises 181 residues: Biofilm-surface layer protein A (181 aa).

A signal peptide spans 1–28 (MKRKLLSSLAISALSLGLLVSAPTASFA).

It belongs to the BslA/BslB family. In terms of assembly, forms polymers.

The protein localises to the secreted. Its subcellular location is the cell wall. Functionally, involved in biofilm formation. Self-polymerizes and forms a layer on the surface of biofilms that confers hydrophobicity to the biofilm. The layer is stable and capable of resistance to high mechanical force compression. Required for complex colony architecture. May function synergistically with exopolysaccharides and TasA amyloid fibers to facilitate the assembly of the biofilm matrix. The chain is Biofilm-surface layer protein A from Bacillus subtilis (strain 168).